Reading from the N-terminus, the 468-residue chain is Citrate synthase, mitochondrial (468 aa).

The transit peptide at 1–30 directs the protein to the mitochondrion; it reads MSFLSISRLAPRLLSSKNAACVVVAARNAS. Catalysis depends on residues histidine 303 and histidine 349. Residue arginine 358 participates in oxaloacetate binding. Aspartate 404 is an active-site residue. Residues arginine 430 and arginine 450 each contribute to the oxaloacetate site.

It belongs to the citrate synthase family. In terms of assembly, homodimer.

It is found in the mitochondrion matrix. The catalysed reaction is oxaloacetate + acetyl-CoA + H2O = citrate + CoA + H(+). It participates in carbohydrate metabolism; tricarboxylic acid cycle; isocitrate from oxaloacetate: step 1/2. Functionally, key enzyme of the Krebs tricarboxylic acid cycle which catalyzes the synthesis of citrate from acetyl coenzyme A and oxaloacetate. The protein is Citrate synthase, mitochondrial (cs) of Danio rerio (Zebrafish).